A 520-amino-acid chain; its full sequence is Cytochrome b5 reductase 4 (520 aa).

Residue M1 is modified to N-acetylmethionine. Residues 1 to 27 (MLNVPSQAFPAPGSQQRVASQGRSKVP) are disordered. Polar residues predominate over residues 13 to 23 (GSQQRVASQGR). The Cytochrome b5 heme-binding domain maps to 54 to 130 (LIEVTEEELK…LKECLVGRMA (77 aa)). Residues H89 and H112 each coordinate heme. The CS domain occupies 164–255 (PSSPSYDWFQ…KETVSWKCLG (92 aa)). One can recognise an FAD-binding FR-type domain in the interval 272–384 (LYYRQCQLIS…SGPEGNFKVS (113 aa)). Residues 364 to 379 (DRLQ…GPEG) and 391 to 423 (DLFL…KVKL) each bind FAD.

It belongs to the flavoprotein pyridine nucleotide cytochrome reductase family. Requires FAD as cofactor. Isoform 2 is expressed in testis, brain, skeletal muscle and in the male germline.

The protein localises to the endoplasmic reticulum. It carries out the reaction 2 Fe(III)-[cytochrome b5] + NADH = 2 Fe(II)-[cytochrome b5] + NAD(+) + H(+). Its function is as follows. NADH-cytochrome b5 reductase involved in endoplasmic reticulum stress response pathway. Plays a critical role in protecting pancreatic beta-cells against oxidant stress, possibly by protecting the cell from excess buildup of reactive oxygen species (ROS). The chain is Cytochrome b5 reductase 4 (Cyb5r4) from Rattus norvegicus (Rat).